A 342-amino-acid polypeptide reads, in one-letter code: Inositol-tetrakisphosphate 1-kinase 1 (342 aa).

1D-myo-inositol 6-phosphate contacts are provided by Lys-28 and Lys-70. Positions 105 and 155 each coordinate ATP. The 217-residue stretch at 116–332 folds into the ATP-grasp domain; that stretch reads DHAADQDSTF…HKDGVGNQQE (217 aa). 1D-myo-inositol 6-phosphate-binding residues include Gly-161 and His-166. ATP contacts are provided by His-166, Gln-187, and Val-190. Residues Lys-198 and Tyr-200 each coordinate 1D-myo-inositol 6-phosphate. Ser-213 contacts ATP. The catalytic specificity elements (CSE) stretch occupies residues 219–247; that stretch reads PEDDASAQGSVSFSQVSNLPTERTAEEYY. Asn-280 is a binding site for 1D-myo-inositol 6-phosphate. Position 282 (Asp-282) interacts with Mg(2+). ATP is bound by residues Ile-296, Asp-297, and Asn-299. Positions 297 and 299 each coordinate Mg(2+). 1D-myo-inositol 6-phosphate contacts are provided by Asn-299, Gly-303, and Lys-306.

This sequence belongs to the ITPK1 family. As to quaternary structure, monomer. Requires Mg(2+) as cofactor. Expressed in the embryo of 15 day after pollination. Expressed in kernels at earlier stages but at very low levels. Expression in the embryo peaks at 15 days after pollination and then declines. No expression is detected from endosperm and vegetative tissues.

It catalyses the reaction 1D-myo-inositol 3,4,5,6-tetrakisphosphate + ATP = 1D-myo-inositol 1,3,4,5,6-pentakisphosphate + ADP + H(+). The enzyme catalyses 1D-myo-inositol 1,3,4-trisphosphate + ATP = 1D-myo-inositol 1,3,4,5-tetrakisphosphate + ADP + H(+). The catalysed reaction is 1D-myo-inositol 1,3,4-trisphosphate + ATP = 1D-myo-inositol 1,3,4,6-tetrakisphosphate + ADP + H(+). It carries out the reaction 1D-myo-inositol 1,2,3,4,5-pentakisphosphate + ATP = 3-diphospho-1D-myo-inositol 1,2,4,5-tetrakisphosphate + ADP. It catalyses the reaction 1D-myo-inositol hexakisphosphate + ATP = 5-diphospho-1D-myo-inositol 1,2,3,4,6-pentakisphosphate + ADP. In terms of biological role, kinase that can phosphorylate various inositol polyphosphate such as Ins(3,4,5,6)P4 or Ins(1,3,4)P3 and participates in phytic acid biosynthesis in developing seeds. Phosphorylates Ins(3,4,5,6)P4 at position 1 to form Ins(1,3,4,5,6)P5. This reaction is thought to have regulatory importance, since Ins(3,4,5,6)P4 is an inhibitor of plasma membrane Ca(2+)-activated Cl(-) channels, while Ins(1,3,4,5,6)P5 is not. Also phosphorylates Ins(1,3,4)P3 on O-5 and O-6 to form Ins(1,3,4,6)P4, an essential molecule in the hexakisphosphate (InsP6) pathway. Also able to phosphorylate Ins(3,5,6)P3 but not Ins(1,4,5)P3, Ins(2,4,5)P3, Ins(1,3,4,6)P4 nor Ins(1,3,5,6)P4. Has higher specific activity on Ins(3,4,5,6)P4 than Ins(1,3,4)P3 and Ins(3,5,6)P3. Can also could use Ins(1,2,5,6)P4 as a substrate. Able to add a beta-phosphate to the 3 positions of Ins(1,2,3,4,5)P5 and to add beta-phosphate to InsP6 to yield 5-InsP7, thus exhibiting InsP6 kinase activity. Also has Ins(1,3,4,5,6)P5 phosphatase activity. The sequence is that of Inositol-tetrakisphosphate 1-kinase 1 from Zea mays (Maize).